The primary structure comprises 61 residues: Conotoxin Cal14.6 (61 aa).

Positions M1 to A21 are cleaved as a signal peptide. Residues G22–G38 constitute a propeptide that is removed on maturation. P57 bears the 4-hydroxyproline; partial mark. At P60 the chain carries Proline amide.

Post-translationally, contains 2 disulfide bonds. As to expression, expressed by the venom duct.

The protein localises to the secreted. Its function is as follows. Probable neurotoxin with unknown target. Possibly targets ion channels. This is Conotoxin Cal14.6 from Californiconus californicus (California cone).